Consider the following 116-residue polypeptide: UPF0342 protein RBAM_010030 (116 aa).

Belongs to the UPF0342 family.

This Bacillus velezensis (strain DSM 23117 / BGSC 10A6 / LMG 26770 / FZB42) (Bacillus amyloliquefaciens subsp. plantarum) protein is UPF0342 protein RBAM_010030.